Here is a 142-residue protein sequence, read N- to C-terminus: Large ribosomal subunit protein uL11 (142 aa).

This sequence belongs to the universal ribosomal protein uL11 family. In terms of assembly, part of the ribosomal stalk of the 50S ribosomal subunit. Interacts with L10 and the large rRNA to form the base of the stalk. L10 forms an elongated spine to which L12 dimers bind in a sequential fashion forming a multimeric L10(L12)X complex. One or more lysine residues are methylated.

Functionally, forms part of the ribosomal stalk which helps the ribosome interact with GTP-bound translation factors. This Thermobifida fusca (strain YX) protein is Large ribosomal subunit protein uL11.